The chain runs to 705 residues: Lethal(3)malignant brain tumor-like protein 2 (705 aa).

Residues 1 to 84 (MEKPRSIEET…GTPRSLDGSG (84 aa)) are disordered. The residue at position 13 (S13) is a Phosphoserine. Acidic residues predominate over residues 15-25 (PMEEEEDDDLE). Residues 38–49 (SSVGSESSSYLE) show a composition bias toward low complexity. A compositionally biased stretch (acidic residues) spans 50–60 (ESSEAENEDRE). A Phosphoserine modification is found at S67. T76 carries the phosphothreonine modification. Residues 81–116 (DGSGSEPAVCEMCGIVGTREAFFSKTKRFCSVSCSR) form an FCS-type zinc finger. 4 residues coordinate Zn(2+): C90, C93, C110, and C114. MBT repeat units follow at residues 179-283 (FDWG…LVPP), 291-391 (TDWK…IKMS), 397-500 (MAHH…LTPP), and 508-604 (FNWE…LQPP). Position 338 is a phosphoserine (S338). A Glycyl lysine isopeptide (Lys-Gly) (interchain with G-Cter in SUMO2) cross-link involves residue K405. The disordered stretch occupies residues 608 to 665 (EPATPLKAKEATKKKKKQFGKKRKRIPPTKTRPLRQGSKKPLLEDDPQGARKISSEPV). A compositionally biased stretch (basic residues) spans 619–634 (TKKKKKQFGKKRKRIP). Glycyl lysine isopeptide (Lys-Gly) (interchain with G-Cter in SUMO2) cross-links involve residues K647, K659, and K675. Residues 680–705 (DVASPDKASSPELPVSVENIKQETDD) form a disordered region. Residues S683, S688, and S689 each carry the phosphoserine modification. K700 is covalently cross-linked (Glycyl lysine isopeptide (Lys-Gly) (interchain with G-Cter in SUMO1); alternate). A Glycyl lysine isopeptide (Lys-Gly) (interchain with G-Cter in SUMO2); alternate cross-link involves residue K700.

In terms of assembly, part of the E2F6.com-1 complex in G0 phase composed of E2F6, MGA, MAX, TFDP1, CBX3, BAT8, EUHMTASE1, RING1, RNF2, MBLR, BAT8 and YAF2.

It localises to the nucleus. Its function is as follows. Putative Polycomb group (PcG) protein. PcG proteins maintain the transcriptionally repressive state of genes, probably via a modification of chromatin, rendering it heritably changed in its expressibility. Its association with a chromatin-remodeling complex suggests that it may contribute to prevent expression of genes that trigger the cell into mitosis. Binds to monomethylated and dimethylated 'Lys-20' on histone H4. Binds histone H3 peptides that are monomethylated or dimethylated on 'Lys-4', 'Lys-9' or 'Lys-27'. In Homo sapiens (Human), this protein is Lethal(3)malignant brain tumor-like protein 2 (L3MBTL2).